Consider the following 437-residue polypeptide: MEQKRTRNPNGRSTIYLGNDGYWHGRVTMGIGDDGKPDRRHVKRKDKDEVVEEVGKLERERDSGNVRKKGQPWTVERWLTHWVESIAPLTCRYKTMRGYQTAVYKHLIPGLGAHRLDRIQNHPEYFEKFYLRMIESGLKPATAHQVHRTARTAFGEAYKRGRIQRNPVSIAKAPRVEEEEVEPLEVEDMQLVIKAALERRNGVRYVIALALGTRQGESLALKWPRLNRQKRTLRITKALQRQTWKHGCSDPHRCGATYHKTEPCKAACKRHTRACPPPCPPACTEHARWCPQRTGGGLVEVDVKSRAGRRTVTLPDQLFDLILKHEKLQGAERELAGTEWHDGEWMFTQPNGKPIDPRQDLDEWKAILVEAGVREARLHDARHTAATVLLVLGVPDRVVMELMGWSSVTMKQRYMHVIDSVRNDVADRLNTYFWGTN.

A Core-binding (CB) domain is found at 73-158 (WTVERWLTHW…TARTAFGEAY (86 aa)). The Tyr recombinase domain maps to 179–428 (EEVEPLEVED…DSVRNDVADR (250 aa)). Residues Arg214, Lys245, His379, Arg382, and Trp405 contribute to the active site. The O-(3'-phospho-DNA)-tyrosine intermediate role is filled by Tyr414.

The protein belongs to the 'phage' integrase family.

Functionally, is a recombinase (or integrase), catalyzing the cutting and rejoining of the recombining DNA molecules. The sequence is that of Integrase (int) from Saccharopolyspora erythraea (Streptomyces erythraeus).